We begin with the raw amino-acid sequence, 441 residues long: POC1 centriolar protein homolog A (441 aa).

7 WD repeats span residues 16–55 (GHRDTVTAVDFNANTKQLASGSMDSCLMVWNMKTQMRAYR), 58–97 (GHKDAILSVDFSPSGHLIASASRDKTVRLWVPSVKGESTA), 100–139 (AHTGTVRSVSFSGDGQSLVTASDDKTIKVWTVHRQKFLFS), 142–181 (QHINWVRCAKFSPDGRLIVSASDDKTIKLWDKTSRECIQS), 184–223 (EHGGFVNFVDFHPSGTCIAAAATDNTVKVWDIRMNKLIQH), 226–265 (VHSGVVNSLSFHPSGNYLITASNDSTLKVLDLLEGRLLYT), and 268–307 (GHQGPVTCVKFSREGDFFASGGSDEQVMVWKTNFDAGSYP). Positions 347 to 376 (DLEPHITEMSVKDRSSPLSYTSRSVDQHHP) are disordered. A compositionally biased stretch (basic and acidic residues) spans 348 to 361 (LEPHITEMSVKDRS). The stretch at 400 to 427 (LTRTVGILEQRLSLTEDKLKECIEQQQA) forms a coiled coil.

Belongs to the WD repeat POC1 family. In terms of assembly, interacts with pat.

It localises to the cytoplasm. The protein localises to the cytoskeleton. In terms of biological role, may play an important role in centriole assembly and/or stability and ciliogenesis. The protein is POC1 centriolar protein homolog A (poc1a) of Xenopus laevis (African clawed frog).